Consider the following 158-residue polypeptide: Rhombotin-2 (158 aa).

2 LIM zinc-binding domains span residues 30 to 89 (CGGC…RLFG) and 94 to 153 (CASC…EWTK).

In terms of assembly, interacts with BEX2 and KDM5A. Interacts via its LIM domains with ELF2 and LDB1. Also interacts with basic helix-loop-helix protein TAL1/SCL and can assemble in a complex with LMO2 and TAL1/SCL. As to expression, expressed in early mouse development in central nervous system, lung, kidney, liver and spleen but only very low levels occur in thymus.

It localises to the nucleus. Functionally, acts with TAL1/SCL to regulate red blood cell development. Also acts with LDB1 to maintain erythroid precursors in an immature state. The protein is Rhombotin-2 (Lmo2) of Mus musculus (Mouse).